A 404-amino-acid polypeptide reads, in one-letter code: Cysteine desulfurase IscS (404 aa).

Residues alanine 75–threonine 76, asparagine 155, glutamine 183, and serine 203–histidine 205 contribute to the pyridoxal 5'-phosphate site. At lysine 206 the chain carries N6-(pyridoxal phosphate)lysine. Threonine 243 provides a ligand contact to pyridoxal 5'-phosphate. Catalysis depends on cysteine 328, which acts as the Cysteine persulfide intermediate. Cysteine 328 is a [2Fe-2S] cluster binding site.

The protein belongs to the class-V pyridoxal-phosphate-dependent aminotransferase family. NifS/IscS subfamily. In terms of assembly, homodimer. Forms a heterotetramer with IscU, interacts with other sulfur acceptors. Requires pyridoxal 5'-phosphate as cofactor.

Its subcellular location is the cytoplasm. It carries out the reaction (sulfur carrier)-H + L-cysteine = (sulfur carrier)-SH + L-alanine. Its pathway is cofactor biosynthesis; iron-sulfur cluster biosynthesis. Its function is as follows. Master enzyme that delivers sulfur to a number of partners involved in Fe-S cluster assembly, tRNA modification or cofactor biosynthesis. Catalyzes the removal of elemental sulfur atoms from cysteine to produce alanine. Functions as a sulfur delivery protein for Fe-S cluster synthesis onto IscU, an Fe-S scaffold assembly protein, as well as other S acceptor proteins. This chain is Cysteine desulfurase IscS, found in Histophilus somni (strain 2336) (Haemophilus somnus).